A 217-amino-acid chain; its full sequence is Adenylate kinase (217 aa).

Residue 10–15 (GAGKGT) coordinates ATP. The tract at residues 30-59 (STGDMLRAAVKAESELGLQVKEVMASGGLV) is NMP. AMP is bound by residues threonine 31, arginine 36, 57–59 (GLV), 85–88 (GFPR), and glutamine 92. Residues 122–159 (GRRVHEGSGRIYHVKYDPPKVEGKDDETGEALIQREDD) are LID. ATP contacts are provided by residues arginine 123 and 132-133 (IY). Residues arginine 156 and arginine 167 each contribute to the AMP site. Glycine 203 contributes to the ATP binding site.

The protein belongs to the adenylate kinase family. As to quaternary structure, monomer.

The protein resides in the cytoplasm. It carries out the reaction AMP + ATP = 2 ADP. The protein operates within purine metabolism; AMP biosynthesis via salvage pathway; AMP from ADP: step 1/1. Functionally, catalyzes the reversible transfer of the terminal phosphate group between ATP and AMP. Plays an important role in cellular energy homeostasis and in adenine nucleotide metabolism. This is Adenylate kinase from Marinobacter nauticus (strain ATCC 700491 / DSM 11845 / VT8) (Marinobacter aquaeolei).